The following is an 828-amino-acid chain: Protein kintoun (828 aa).

Disordered stretches follow at residues 1–31, 223–250, 383–424, 556–668, and 741–828; these read MSGSTASARNKHSKGNLKHNNNKNKNNDEPI, KNPTDEELEPHPLEHSFPTKPTAGEGEP, DSGV…PTSN, APVQ…HRGI, and KKNQ…EDLI. A compositionally biased stretch (basic residues) spans 9 to 22; it reads RNKHSKGNLKHNNN. Phosphoserine is present on S384. Positions 395–414 are enriched in acidic residues; the sequence is PVEEEEDGEDEIEAEEEEEE. Basic and acidic residues predominate over residues 556–573; that stretch reads APVQEDKPGDIQFKRNDQ. The segment covering 591–601 has biased composition (acidic residues); that stretch reads EREEGEIEEAE. Residues 606 to 620 are compositionally biased toward basic residues; that stretch reads KKSASKKQRGKRNKK. The segment covering 625 to 641 has biased composition (polar residues); sequence SESACVSLPTSVDSQPM. Residues 741-755 show a composition bias toward basic residues; that stretch reads KKNQKRRDCKLRAQQ. Residue S759 is modified to Phosphoserine. Positions 788 to 808 are enriched in basic and acidic residues; the sequence is DSGLDLTRHNKKRELAEEADN. A compositionally biased stretch (acidic residues) spans 815 to 828; sequence EMDDDDDDEDEDLI.

Belongs to the PIH1 family. Kintoun subfamily. As to quaternary structure, interacts with Pp1alpha-96A, Pp1-87B, Pp1-13C and flw.

Its subcellular location is the cytoplasm. In terms of biological role, required for cytoplasmic pre-assembly of axonemal dyneins, thereby playing a central role in motility in cilia and flagella. Involved in pre-assembly of dynein arm complexes in the cytoplasm before intraflagellar transport loads them for the ciliary compartment. The polypeptide is Protein kintoun (Drosophila willistoni (Fruit fly)).